We begin with the raw amino-acid sequence, 589 residues long: MAHELSAGSVFAGYRIERMLGAGGMGTVYLARNPDLPRSEALKVLAAELSRDLDFRARFVREADVAAGLDHPNIVAVHQRGQFEGRLWIAMQFVDGGNAEDALRAATMTTARAVYVIGEVAKALDYAHQQGVIHRDIKPANFLLSRAAGGDERVLLSDFGIARALGDTGLTSTGSVLATLAYAAPEVLAGQGFDGRADLYSLGCALFRLLTGEAPFAAGAGAAVAVVAGHLHQPPPTVSDRVPGLSAAMDAVIATAMAKDPMRRFTSAGEFAHAAAAALYGGATDGWVPPSPAPHVISQGAVPGSPWWQHPVGSVTALATPPGHGWPPGLPPLPRRPRRYRRGVAAVAAVMVVAAAAVTAVTMTSHQPRTATPPSAAALSPTSSSTTPPQPPIVTRSRLPGLLPPLDDVKNFVGIQNLVAHEPMLQPQTPNGSINPAECWPAVGGGVPSAYDLGTVIGFYGLTIDEPPTGTAPNQVGQLIVAFRDAATAQRHLADLASIWRRCGGRTVTLFRSEWRRPVELSTSVPEVVDGITTMVLTAQGPVLRVREDHAIAAKNNVLVDVDIMTPDTSRGQQAVIGITNYILAKIPG.

Topologically, residues 1–342 are cytoplasmic; the sequence is MAHELSAGSV…LPRRPRRYRR (342 aa). Residues 14–276 form the Protein kinase domain; the sequence is YRIERMLGAG…SAGEFAHAAA (263 aa). ATP-binding positions include 20 to 28 and lysine 43; that span reads LGAGGMGTV. Aspartate 136 functions as the Proton acceptor in the catalytic mechanism. The helical transmembrane segment at 343–363 threads the bilayer; that stretch reads GVAAVAAVMVVAAAAVTAVTM. At 364-589 the chain is on the extracellular side; that stretch reads TSHQPRTATP…TNYILAKIPG (226 aa). A compositionally biased stretch (low complexity) spans 365-387; that stretch reads SHQPRTATPPSAAALSPTSSSTT. A disordered region spans residues 365–400; it reads SHQPRTATPPSAAALSPTSSSTTPPQPPIVTRSRLP.

Belongs to the protein kinase superfamily. Ser/Thr protein kinase family. In terms of assembly, homodimer.

The protein localises to the cell membrane. The catalysed reaction is L-seryl-[protein] + ATP = O-phospho-L-seryl-[protein] + ADP + H(+). The enzyme catalyses L-threonyl-[protein] + ATP = O-phospho-L-threonyl-[protein] + ADP + H(+). This Mycobacterium bovis (strain ATCC BAA-935 / AF2122/97) protein is Serine/threonine-protein kinase PknJ (pknJ).